Reading from the N-terminus, the 324-residue chain is Putative GTPase PYRAB02490 (324 aa).

GTP is bound by residues 52–60 (GPPGAGKST), Asp194, and 229–231 (VAT).

It belongs to the SIMIBI class G3E GTPase family. ArgK/MeaB subfamily.

Functionally, may have GTPase activity. May also bind and hydrolyze ATP. May function as chaperone. This is Putative GTPase PYRAB02490 from Pyrococcus abyssi (strain GE5 / Orsay).